We begin with the raw amino-acid sequence, 337 residues long: ATP-dependent 6-phosphofructokinase (337 aa).

An ATP-binding site is contributed by G11. 21–25 (RAVVR) provides a ligand contact to ADP. Residues 72–73 (RY) and 102–105 (GDGS) each bind ATP. D103 is a Mg(2+) binding site. 125 to 127 (TID) serves as a coordination point for substrate. D127 serves as the catalytic Proton acceptor. R154 is an ADP binding site. Substrate contacts are provided by residues R162 and 169-171 (MGR). Residues 185-187 (GAD), K212, and 214-216 (KNH) each bind ADP. Substrate-binding positions include E223, R245, and 251–254 (HILR).

This sequence belongs to the phosphofructokinase type A (PFKA) family. ATP-dependent PFK group I subfamily. Prokaryotic clade 'B1' sub-subfamily. Homotetramer. Requires Mg(2+) as cofactor.

It is found in the cytoplasm. It catalyses the reaction beta-D-fructose 6-phosphate + ATP = beta-D-fructose 1,6-bisphosphate + ADP + H(+). The protein operates within carbohydrate degradation; glycolysis; D-glyceraldehyde 3-phosphate and glycerone phosphate from D-glucose: step 3/4. With respect to regulation, allosterically activated by ADP and other diphosphonucleosides, and allosterically inhibited by phosphoenolpyruvate. Its function is as follows. Catalyzes the phosphorylation of D-fructose 6-phosphate to fructose 1,6-bisphosphate by ATP, the first committing step of glycolysis. This Streptococcus pyogenes serotype M3 (strain SSI-1) protein is ATP-dependent 6-phosphofructokinase.